A 233-amino-acid chain; its full sequence is ATP synthase subunit a, chloroplastic (233 aa).

4 consecutive transmembrane segments (helical) span residues 27–47 (VLLI…LGTL), 84–104 (VPFV…GALI), 122–142 (DINT…YAGF), and 192–212 (VLCL…GIFA).

It belongs to the ATPase A chain family. F-type ATPases have 2 components, CF(1) - the catalytic core - and CF(0) - the membrane proton channel. CF(1) has five subunits: alpha(3), beta(3), gamma(1), delta(1), epsilon(1). CF(0) has four main subunits: a, b, b' and c.

It is found in the plastid. It localises to the chloroplast thylakoid membrane. Its function is as follows. Key component of the proton channel; it plays a direct role in the translocation of protons across the membrane. This Ochrosphaera neapolitana protein is ATP synthase subunit a, chloroplastic.